Reading from the N-terminus, the 502-residue chain is L-ornithine N(5)-monooxygenase (502 aa).

Basic and acidic residues predominate over residues 1–10 (MEPVERKLEI). Positions 1–34 (MEPVERKLEIGSRSYSKMPLTQQRSSGEPPRLKA) are disordered. Residues 13–26 (RSYSKMPLTQQRSS) are compositionally biased toward polar residues. FAD is bound by residues 83-91 (ERQKQFAWH) and Q102. Position 107 (K107) interacts with substrate. V168 contacts FAD. Residues 254-257 (SGQS) and R279 contribute to the NADP(+) site. Substrate is bound by residues 293–296 (NEVF) and N323. 323 to 325 (NYS) provides a ligand contact to NADP(+). 466–468 (SLL) contributes to the FAD binding site. Substrate is bound at residue S469.

Belongs to the lysine N(6)-hydroxylase/L-ornithine N(5)-oxygenase family. As to quaternary structure, homotetramer. Requires FAD as cofactor.

The enzyme catalyses L-ornithine + NADPH + O2 = N(5)-hydroxy-L-ornithine + NADP(+) + H2O. It catalyses the reaction L-ornithine + NADH + O2 = N(5)-hydroxy-L-ornithine + NAD(+) + H2O. It functions in the pathway siderophore biosynthesis. Its function is as follows. Catalyzes the conversion of L-ornithine to N(5)-hydroxyornithine, the first step in the biosynthesis of all hydroxamate-containing siderophores, such as deferriferrichrysin. In Aspergillus oryzae (strain ATCC 42149 / RIB 40) (Yellow koji mold), this protein is L-ornithine N(5)-monooxygenase.